The sequence spans 343 residues: Heat-inducible transcription repressor HrcA (343 aa).

This sequence belongs to the HrcA family.

Its function is as follows. Negative regulator of class I heat shock genes (grpE-dnaK-dnaJ and groELS operons). Prevents heat-shock induction of these operons. The chain is Heat-inducible transcription repressor HrcA from Phytoplasma mali (strain AT).